The chain runs to 146 residues: 3-hydroxyacyl-[acyl-carrier-protein] dehydratase FabZ (146 aa).

His-49 is an active-site residue.

The protein belongs to the thioester dehydratase family. FabZ subfamily.

It localises to the cytoplasm. The enzyme catalyses a (3R)-hydroxyacyl-[ACP] = a (2E)-enoyl-[ACP] + H2O. In terms of biological role, involved in unsaturated fatty acids biosynthesis. Catalyzes the dehydration of short chain beta-hydroxyacyl-ACPs and long chain saturated and unsaturated beta-hydroxyacyl-ACPs. The sequence is that of 3-hydroxyacyl-[acyl-carrier-protein] dehydratase FabZ from Wolbachia sp. subsp. Brugia malayi (strain TRS).